The chain runs to 360 residues: Ribosomal RNA large subunit methyltransferase F (360 aa).

A disordered region spans residues 1-36 (MSKLISKQGKRPALSQSGLAKPSTSKKSSASKNANT). Positions 23-36 (STSKKSSASKNANT) are enriched in low complexity.

The protein belongs to the methyltransferase superfamily. METTL16/RlmF family.

Its subcellular location is the cytoplasm. The catalysed reaction is adenosine(1618) in 23S rRNA + S-adenosyl-L-methionine = N(6)-methyladenosine(1618) in 23S rRNA + S-adenosyl-L-homocysteine + H(+). Its function is as follows. Specifically methylates the adenine in position 1618 of 23S rRNA. The sequence is that of Ribosomal RNA large subunit methyltransferase F from Shewanella denitrificans (strain OS217 / ATCC BAA-1090 / DSM 15013).